Here is a 142-residue protein sequence, read N- to C-terminus: Small ribosomal subunit protein uS9 (142 aa).

This sequence belongs to the universal ribosomal protein uS9 family. As to quaternary structure, component of the small ribosomal subunit. Mature ribosomes consist of a small (40S) and a large (60S) subunit. The 40S subunit contains about 32 different proteins and 1 molecule of RNA (18S). The 60S subunit contains 45 different proteins and 3 molecules of RNA (25S, 5.8S and 5S).

The protein resides in the cytoplasm. Its function is as follows. Component of the ribosome, a large ribonucleoprotein complex responsible for the synthesis of proteins in the cell. The small ribosomal subunit (SSU) binds messenger RNAs (mRNAs) and translates the encoded message by selecting cognate aminoacyl-transfer RNA (tRNA) molecules. The large subunit (LSU) contains the ribosomal catalytic site termed the peptidyl transferase center (PTC), which catalyzes the formation of peptide bonds, thereby polymerizing the amino acids delivered by tRNAs into a polypeptide chain. The nascent polypeptides leave the ribosome through a tunnel in the LSU and interact with protein factors that function in enzymatic processing, targeting, and the membrane insertion of nascent chains at the exit of the ribosomal tunnel. The protein is Small ribosomal subunit protein uS9 (RPS16A) of Candida albicans (strain SC5314 / ATCC MYA-2876) (Yeast).